A 657-amino-acid polypeptide reads, in one-letter code: Sodium/glucose cotransporter 4 (657 aa).

Over 1 to 24 (MPASPEPVTATPEPEEVPAKFTLE) the chain is Extracellular. The chain crosses the membrane as a helical span at residues 25 to 45 (AADIAVVVVYFVFVLAVGIWS). Topologically, residues 46–79 (SIRANRGTVGGYFLAGRSMTWWPIGASLMSSNVG) are cytoplasmic. The helical transmembrane segment at 80-100 (SGLFIGLAGTGAAGGLAVGGF) threads the bilayer. Topologically, residues 101-104 (EWNA) are extracellular. The chain crosses the membrane as a helical span at residues 105 to 125 (AWVLIALGWIFVPVYISAGVV). At 126 to 147 (TMPEYLRKRFGGQRIRIYMSVL) the chain is on the cytoplasmic side. A helical membrane pass occupies residues 148–168 (SLILYILTKISTDIFSGALFI). Topologically, residues 169 to 180 (QVSLGWDLYLST) are extracellular. The helical transmembrane segment at 181-201 (VILLAVTALYTIAGGLTAVIY) threads the bilayer. Residues 202–207 (TDALQT) lie on the Cytoplasmic side of the membrane. Residues 208–228 (VIMVIGAFVLMFIAFDKVGWY) form a helical membrane-spanning segment. Over 229–265 (EGLLVQYEKAAPALTVPNTTCHLPRSDAFHIFRDPVT) the chain is Extracellular. N-linked (GlcNAc...) asparagine glycosylation occurs at asparagine 246. The chain crosses the membrane as a helical span at residues 266–286 (GDIPWPGLIFGLTVLATWVWC). The Cytoplasmic segment spans residues 287-307 (TDQVIVQRSLSAKNLSHAKAG). A helical transmembrane segment spans residues 308–328 (SVLGGYLKVFPMFFVVMPGMI). Over 329–373 (SRALYPDEVACVDPDECQKICGAKVGCSNIAYPKLVVELMPVGMR) the chain is Extracellular. The chain crosses the membrane as a helical span at residues 374 to 396 (GLMIAVMMAALMSSLTSIFNSSS). The Cytoplasmic segment spans residues 397 to 417 (TLFTMDIWQRIRPRASEKELM). Residues 418–438 (VVGRVFILLLVALSIVWIPVI) traverse the membrane as a helical segment. Over 439–451 (QTANSGQLFDYIQ) the chain is Extracellular. Residues 452 to 472 (AITSFLSPPITTVFIMAIFWG) form a helical membrane-spanning segment. Residues 473–478 (RVNEQG) lie on the Cytoplasmic side of the membrane. A helical membrane pass occupies residues 479–499 (AFWGLMVGLVVGMVRMIMEFV). Topologically, residues 500 to 520 (YGTPSCGETDLRPSLLKDVHY) are extracellular. A helical transmembrane segment spans residues 521–541 (LYFALILLALTVLIITAVSLC). Residues 542–636 (TAPIPEKHLV…SIEEDHMWKT (95 aa)) are Cytoplasmic-facing. Residues 637-657 (VCNVNALILLTANVFLWGYFA) traverse the membrane as a helical segment.

This sequence belongs to the sodium:solute symporter (SSF) (TC 2.A.21) family.

The protein localises to the membrane. Its function is as follows. Probable sodium-dependent sugar transporter. The chain is Sodium/glucose cotransporter 4 (slc5a9) from Danio rerio (Zebrafish).